We begin with the raw amino-acid sequence, 334 residues long: D-aspartate oxidase 2 (334 aa).

5 residues coordinate FAD: Asp-38, Lys-39, Ser-46, Gly-310, and Thr-315.

It belongs to the DAMOX/DASOX family. FAD is required as a cofactor. As to expression, expressed in the intestinal cells, pharyngeal muscles, and body wall muscles in adult hermaphrodites.

The protein localises to the cytoplasm. It carries out the reaction D-aspartate + O2 + H2O = oxaloacetate + H2O2 + NH4(+). It catalyses the reaction D-glutamate + O2 + H2O = H2O2 + 2-oxoglutarate + NH4(+). Its activity is regulated as follows. Inhibited by thiolactomycin. In terms of biological role, selectively catalyzes the oxidative deamination of acidic amino acids. May play a role in the egg-laying events and early development of the worm, in addition to quality control of the germ cells. The polypeptide is D-aspartate oxidase 2 (ddo-2) (Caenorhabditis elegans).